Here is a 70-residue protein sequence, read N- to C-terminus: MKTSIHPNYNDVQIICSCGNTFKTRSTIDKKELHLDVCSSCHPFYTGKQKIMDSAGRVEKFKSRYASFKR.

Residues Cys16, Cys18, Cys38, and Cys41 each coordinate Zn(2+).

The protein belongs to the bacterial ribosomal protein bL31 family. Type A subfamily. Part of the 50S ribosomal subunit. Requires Zn(2+) as cofactor.

In terms of biological role, binds the 23S rRNA. The chain is Large ribosomal subunit protein bL31 from Vesicomyosocius okutanii subsp. Calyptogena okutanii (strain HA).